Consider the following 315-residue polypeptide: Protoheme IX farnesyltransferase (315 aa).

Transmembrane regions (helical) follow at residues 38–58 (IIEL…QGVP), 62–82 (LVLL…ALNM), 111–131 (LVFG…TVNW), 132–152 (LSAW…TMIL), 159–179 (NIVW…SAVT), 184–204 (WAPV…YWPL), 233–253 (IVIY…LGYT), 255–275 (WFYT…AHGL), and 293–313 (LFHW…VDPF).

This sequence belongs to the UbiA prenyltransferase family. Protoheme IX farnesyltransferase subfamily.

The protein resides in the cell membrane. It catalyses the reaction heme b + (2E,6E)-farnesyl diphosphate + H2O = Fe(II)-heme o + diphosphate. Its pathway is porphyrin-containing compound metabolism; heme O biosynthesis; heme O from protoheme: step 1/1. Functionally, converts heme B (protoheme IX) to heme O by substitution of the vinyl group on carbon 2 of heme B porphyrin ring with a hydroxyethyl farnesyl side group. The sequence is that of Protoheme IX farnesyltransferase from Streptomyces coelicolor (strain ATCC BAA-471 / A3(2) / M145).